The chain runs to 302 residues: Putative 2-dehydro-3-deoxy-D-gluconate aldolase YagE (302 aa).

Active-site charge relay system residues include S49 and Y112. Catalysis depends on Y138, which acts as the Proton donor. K167 (schiff-base intermediate with substrate) is an active-site residue.

Belongs to the DapA family. As to quaternary structure, a dimer of dimers.

The protein localises to the cytoplasm. The catalysed reaction is 2-dehydro-3-deoxy-D-gluconate = D-glyceraldehyde + pyruvate. It carries out the reaction 2-dehydro-3-deoxy-D-arabinonate = glycolaldehyde + pyruvate. Its function is as follows. Catalyzes the formation of 2-keto-3-deoxy-gluconate (KDG) from pyruvate and glyceraldehyde. May also function as a 2-dehydro-3-deoxy-D-pentonate aldolase. Overexpression leads to increased growth (over 2 hours) in the presence of the antibiotics norfloxacin, ampicillin and streptomycin. This Escherichia coli (strain K12) protein is Putative 2-dehydro-3-deoxy-D-gluconate aldolase YagE (yagE).